A 59-amino-acid chain; its full sequence is UPF0181 protein YoaH (59 aa).

The protein belongs to the UPF0181 family.

This is UPF0181 protein YoaH from Salmonella arizonae (strain ATCC BAA-731 / CDC346-86 / RSK2980).